The chain runs to 322 residues: Acetyl-coenzyme A carboxylase carboxyl transferase subunit alpha (322 aa).

Residues 30 to 293 enclose the CoA carboxyltransferase C-terminal domain; the sequence is AVDISAEILR…KKALQDSLKL (264 aa).

The protein belongs to the AccA family. In terms of assembly, acetyl-CoA carboxylase is a heterohexamer composed of biotin carboxyl carrier protein (AccB), biotin carboxylase (AccC) and two subunits each of ACCase subunit alpha (AccA) and ACCase subunit beta (AccD).

The protein resides in the cytoplasm. The enzyme catalyses N(6)-carboxybiotinyl-L-lysyl-[protein] + acetyl-CoA = N(6)-biotinyl-L-lysyl-[protein] + malonyl-CoA. It participates in lipid metabolism; malonyl-CoA biosynthesis; malonyl-CoA from acetyl-CoA: step 1/1. In terms of biological role, component of the acetyl coenzyme A carboxylase (ACC) complex. First, biotin carboxylase catalyzes the carboxylation of biotin on its carrier protein (BCCP) and then the CO(2) group is transferred by the carboxyltransferase to acetyl-CoA to form malonyl-CoA. This chain is Acetyl-coenzyme A carboxylase carboxyl transferase subunit alpha, found in Nitrosospira multiformis (strain ATCC 25196 / NCIMB 11849 / C 71).